The following is a 102-amino-acid chain: Small ribosomal subunit protein uS10 (102 aa).

This sequence belongs to the universal ribosomal protein uS10 family. In terms of assembly, part of the 30S ribosomal subunit.

In terms of biological role, involved in the binding of tRNA to the ribosomes. The sequence is that of Small ribosomal subunit protein uS10 from Pseudothermotoga lettingae (strain ATCC BAA-301 / DSM 14385 / NBRC 107922 / TMO) (Thermotoga lettingae).